The primary structure comprises 152 residues: Nucleoside diphosphate kinase B (152 aa).

The interaction with AKAP13 stretch occupies residues 1-66 (MANLERTFIA…DRPFFPGLVK (66 aa)). ATP is bound by residues Lys12, Phe60, Arg88, Thr94, Arg105, and Asn115. His118 functions as the Pros-phosphohistidine intermediate in the catalytic mechanism.

Belongs to the NDK family. Hexamer of two different chains: An and B (A6, A5B, A4B2, A3B3, A2B4, AB5, B6). Interacts with CAPN8. Interacts with AKAP13. Interacts with ITGB1BP1 (via C-terminal domain region). Interacts with BCL2L10. Requires Mg(2+) as cofactor.

It localises to the cytoplasm. The protein localises to the cell projection. The protein resides in the lamellipodium. Its subcellular location is the ruffle. It is found in the nucleus. The enzyme catalyses a 2'-deoxyribonucleoside 5'-diphosphate + ATP = a 2'-deoxyribonucleoside 5'-triphosphate + ADP. It carries out the reaction a ribonucleoside 5'-diphosphate + ATP = a ribonucleoside 5'-triphosphate + ADP. It catalyses the reaction ATP + protein L-histidine = ADP + protein N-phospho-L-histidine.. Functionally, major role in the synthesis of nucleoside triphosphates other than ATP. The ATP gamma phosphate is transferred to the NDP beta phosphate via a ping-pong mechanism, using a phosphorylated active-site intermediate. Negatively regulates Rho activity by interacting with AKAP13/LBC. Acts as a transcriptional activator of the MYC gene; binds DNA non-specifically. Binds to both single-stranded guanine- and cytosine-rich strands within the nuclease hypersensitive element (NHE) III(1) region of the MYC gene promoter. Does not bind to duplex NHE III(1). Has G-quadruplex (G4) DNA-binding activity, which is independent of its nucleotide-binding and kinase activity. Binds both folded and unfolded G4 with similar low nanomolar affinities. Stabilizes folded G4s regardless of whether they are prefolded or not. Exhibits histidine protein kinase activity. The chain is Nucleoside diphosphate kinase B (NME2) from Pongo abelii (Sumatran orangutan).